A 537-amino-acid chain; its full sequence is Phosphoenolpyruvate carboxykinase (ATP) (537 aa).

Residues R61, Y194, and K200 each coordinate substrate. ATP-binding positions include K200, H219, and 235–243; that span reads GLSGTGKTT. Residues K200 and H219 each contribute to the Mn(2+) site. Residue D256 coordinates Mn(2+). ATP is bound by residues E284, R322, and T448. R322 provides a ligand contact to substrate.

Belongs to the phosphoenolpyruvate carboxykinase (ATP) family. The cofactor is Mn(2+).

It is found in the cytoplasm. It catalyses the reaction oxaloacetate + ATP = phosphoenolpyruvate + ADP + CO2. The protein operates within carbohydrate biosynthesis; gluconeogenesis. Its function is as follows. Involved in the gluconeogenesis. Catalyzes the conversion of oxaloacetate (OAA) to phosphoenolpyruvate (PEP) through direct phosphoryl transfer between the nucleoside triphosphate and OAA. The chain is Phosphoenolpyruvate carboxykinase (ATP) from Bradyrhizobium sp. (strain ORS 278).